Here is a 92-residue protein sequence, read N- to C-terminus: Small ribosomal subunit protein uS19c (92 aa).

This sequence belongs to the universal ribosomal protein uS19 family.

It localises to the plastid. Its subcellular location is the chloroplast. Its function is as follows. Protein S19 forms a complex with S13 that binds strongly to the 16S ribosomal RNA. The protein is Small ribosomal subunit protein uS19c (rps19) of Pisum sativum (Garden pea).